Here is a 262-residue protein sequence, read N- to C-terminus: Type III pantothenate kinase (262 aa).

Asp-6–Val-13 contributes to the ATP binding site. Substrate-binding positions include Tyr-100 and Gly-107–Arg-110. Asp-109 acts as the Proton acceptor in catalysis. Asp-129 contributes to the K(+) binding site. Thr-132 is an ATP binding site. Thr-184 serves as a coordination point for substrate.

The protein belongs to the type III pantothenate kinase family. Homodimer. NH4(+) is required as a cofactor. K(+) serves as cofactor.

Its subcellular location is the cytoplasm. The catalysed reaction is (R)-pantothenate + ATP = (R)-4'-phosphopantothenate + ADP + H(+). Its pathway is cofactor biosynthesis; coenzyme A biosynthesis; CoA from (R)-pantothenate: step 1/5. Catalyzes the phosphorylation of pantothenate (Pan), the first step in CoA biosynthesis. In Clostridium tetani (strain Massachusetts / E88), this protein is Type III pantothenate kinase.